Reading from the N-terminus, the 101-residue chain is NAD(P)H-quinone oxidoreductase subunit 4L, chloroplastic (101 aa).

3 helical membrane-spanning segments follow: residues 2 to 22, 32 to 52, and 61 to 81; these read YIEN…YGLL, MCLE…SNFI, and VIAI…LALV.

This sequence belongs to the complex I subunit 4L family. NDH is composed of at least 16 different subunits, 5 of which are encoded in the nucleus.

Its subcellular location is the plastid. It localises to the chloroplast thylakoid membrane. It catalyses the reaction a plastoquinone + NADH + (n+1) H(+)(in) = a plastoquinol + NAD(+) + n H(+)(out). The catalysed reaction is a plastoquinone + NADPH + (n+1) H(+)(in) = a plastoquinol + NADP(+) + n H(+)(out). Its function is as follows. NDH shuttles electrons from NAD(P)H:plastoquinone, via FMN and iron-sulfur (Fe-S) centers, to quinones in the photosynthetic chain and possibly in a chloroplast respiratory chain. The immediate electron acceptor for the enzyme in this species is believed to be plastoquinone. Couples the redox reaction to proton translocation, and thus conserves the redox energy in a proton gradient. The polypeptide is NAD(P)H-quinone oxidoreductase subunit 4L, chloroplastic (Mesostigma viride (Green alga)).